Here is a 480-residue protein sequence, read N- to C-terminus: CASP8 and FADD-like apoptosis regulator (480 aa).

DED domains follow at residues 1 to 73 (MSAE…RILK) and 92 to 170 (DYRV…KIQK). The segment at 1–195 (MSAEVIHQVE…LQAAIQKSLK (195 aa)) is interaction with CASP8. Positions 1 to 227 (MSAEVIHQVE…GAQQEPVKKS (227 aa)) are interaction with FADD. Residues 1–305 (MSAEVIHQVE…FACMPEHRDY (305 aa)) form an interaction with CASP8 propeptide region. Residues 1 to 435 (MSAEVIHQVE…CLSQKLRQER (435 aa)) form a not proteolytically processed and involved in apoptosis inhibition region. The tract at residues 192 to 435 (KSLKDPSNNF…CLSQKLRQER (244 aa)) is interaction with CASP3. The tract at residues 192 to 480 (KSLKDPSNNF…LRKKLILSYT (289 aa)) is interaction with TRAF1 and TRAF2. Residues 217-480 (LGAQQEPVKK…LRKKLILSYT (264 aa)) form an interaction with CASP8 subunits p18 and p10 region. A caspase region spans residues 263–358 (ETELLRDTFT…AGKPKMFFIQ (96 aa)). Positions 370–480 (SSLLEVDGPA…LRKKLILSYT (111 aa)) are interaction with CASP8.

It belongs to the peptidase C14A family. As to quaternary structure, TNFRSF6 stimulation triggers recruitment to the death-inducing signaling complex (DISC) formed by TNFRSF6, FADD and CASP8. A proteolytic fragment (p43) stays associated with the DISC. Also interacts with FADD, CASP8, CASP3, TRAF1, TRAF2 and Bcl-X(L) (in vitro). Interacts with RIPK1. (Microbial infection) Interacts with HBV protein X. In terms of processing, proteolytically processed by CASP8 generating subunit p43 and p12. In terms of tissue distribution, widely expressed. Higher expression in skeletal muscle, pancreas, heart, kidney, placenta, and peripheral blood leukocytes. Also detected in diverse cell lines. Isoform 8 is predominantly expressed in testis and skeletal muscle.

In terms of biological role, apoptosis regulator protein which may function as a crucial link between cell survival and cell death pathways in mammalian cells. Acts as an inhibitor of TNFRSF6 mediated apoptosis. A proteolytic fragment (p43) is likely retained in the death-inducing signaling complex (DISC) thereby blocking further recruitment and processing of caspase-8 at the complex. Full length and shorter isoforms have been shown either to induce apoptosis or to reduce TNFRSF-triggered apoptosis. Lacks enzymatic (caspase) activity. The sequence is that of CASP8 and FADD-like apoptosis regulator (CFLAR) from Homo sapiens (Human).